The chain runs to 375 residues: Alcohol dehydrogenase 1 (375 aa).

N-acetylserine is present on S2. 7 residues coordinate Zn(2+): C47, H68, C98, C101, C104, C112, and C175. NAD(+) is bound by residues 200–205 (WSGRVG), D224, and K229. K234 carries the post-translational modification N6-succinyllysine. Position 293 to 295 (293 to 295 (VGV)) interacts with NAD(+). The residue at position 340 (K340) is an N6-succinyllysine. R370 serves as a coordination point for NAD(+).

This sequence belongs to the zinc-containing alcohol dehydrogenase family. Class-I subfamily. As to quaternary structure, homodimer. Zn(2+) is required as a cofactor.

The protein resides in the cytoplasm. The enzyme catalyses a primary alcohol + NAD(+) = an aldehyde + NADH + H(+). It carries out the reaction a secondary alcohol + NAD(+) = a ketone + NADH + H(+). This Geomys attwateri (Attwater's pocket gopher) protein is Alcohol dehydrogenase 1 (ADH1).